A 185-amino-acid polypeptide reads, in one-letter code: Acireductone dioxygenase (185 aa).

The interval 1-23 is disordered; that stretch reads MSRLSIHPEGNTNATSPAEPLLE. Fe(2+) is bound by residues histidine 102, histidine 104, glutamate 108, and histidine 146. Residues histidine 102, histidine 104, glutamate 108, and histidine 146 each coordinate Ni(2+).

The protein belongs to the acireductone dioxygenase (ARD) family. As to quaternary structure, monomer. It depends on Fe(2+) as a cofactor. Ni(2+) serves as cofactor.

It carries out the reaction 1,2-dihydroxy-5-(methylsulfanyl)pent-1-en-3-one + O2 = 3-(methylsulfanyl)propanoate + CO + formate + 2 H(+). The enzyme catalyses 1,2-dihydroxy-5-(methylsulfanyl)pent-1-en-3-one + O2 = 4-methylsulfanyl-2-oxobutanoate + formate + 2 H(+). The protein operates within amino-acid biosynthesis; L-methionine biosynthesis via salvage pathway; L-methionine from S-methyl-5-thio-alpha-D-ribose 1-phosphate: step 5/6. Functionally, catalyzes 2 different reactions between oxygen and the acireductone 1,2-dihydroxy-3-keto-5-methylthiopentene (DHK-MTPene) depending upon the metal bound in the active site. Fe-containing acireductone dioxygenase (Fe-ARD) produces formate and 2-keto-4-methylthiobutyrate (KMTB), the alpha-ketoacid precursor of methionine in the methionine recycle pathway. Ni-containing acireductone dioxygenase (Ni-ARD) produces methylthiopropionate, carbon monoxide and formate, and does not lie on the methionine recycle pathway. This Prochlorococcus marinus (strain MIT 9303) protein is Acireductone dioxygenase.